Reading from the N-terminus, the 253-residue chain is Tryptophan synthase alpha chain (253 aa).

Active-site proton acceptor residues include Glu48 and Asp59.

Belongs to the TrpA family. Tetramer of two alpha and two beta chains.

It carries out the reaction (1S,2R)-1-C-(indol-3-yl)glycerol 3-phosphate + L-serine = D-glyceraldehyde 3-phosphate + L-tryptophan + H2O. Its pathway is amino-acid biosynthesis; L-tryptophan biosynthesis; L-tryptophan from chorismate: step 5/5. The alpha subunit is responsible for the aldol cleavage of indoleglycerol phosphate to indole and glyceraldehyde 3-phosphate. This chain is Tryptophan synthase alpha chain, found in Caldicellulosiruptor saccharolyticus (strain ATCC 43494 / DSM 8903 / Tp8T 6331).